The chain runs to 126 residues: Aspartate 1-decarboxylase (126 aa).

Residue serine 25 is the Schiff-base intermediate with substrate; via pyruvic acid of the active site. Serine 25 is subject to Pyruvic acid (Ser). Position 57 (threonine 57) interacts with substrate. Tyrosine 58 acts as the Proton donor in catalysis. 73 to 75 lines the substrate pocket; that stretch reads GAA.

It belongs to the PanD family. In terms of assembly, heterooctamer of four alpha and four beta subunits. The cofactor is pyruvate. In terms of processing, is synthesized initially as an inactive proenzyme, which is activated by self-cleavage at a specific serine bond to produce a beta-subunit with a hydroxyl group at its C-terminus and an alpha-subunit with a pyruvoyl group at its N-terminus.

Its subcellular location is the cytoplasm. The catalysed reaction is L-aspartate + H(+) = beta-alanine + CO2. It functions in the pathway cofactor biosynthesis; (R)-pantothenate biosynthesis; beta-alanine from L-aspartate: step 1/1. Catalyzes the pyruvoyl-dependent decarboxylation of aspartate to produce beta-alanine. The chain is Aspartate 1-decarboxylase from Chromohalobacter salexigens (strain ATCC BAA-138 / DSM 3043 / CIP 106854 / NCIMB 13768 / 1H11).